The chain runs to 106 residues: Toxin-like structure LSTX-D9 (106 aa).

The signal sequence occupies residues 1–20 (MMKVLVVVALLLTLIIYSSS). Residues 21–41 (DGIDDLEADELVSLMAHEQTR) constitute a propeptide that is removed on maturation. Disulfide bonds link C45–C60, C52–C69, C59–C85, and C71–C83.

This sequence belongs to the neurotoxin 19 (CSTX) family. 02 (D7) subfamily. In terms of tissue distribution, expressed by the venom gland.

It is found in the secreted. This chain is Toxin-like structure LSTX-D9, found in Lycosa singoriensis (Wolf spider).